A 122-amino-acid polypeptide reads, in one-letter code: Large ribosomal subunit protein uL14 (122 aa).

This sequence belongs to the universal ribosomal protein uL14 family. As to quaternary structure, part of the 50S ribosomal subunit. Forms a cluster with proteins L3 and L19. In the 70S ribosome, L14 and L19 interact and together make contacts with the 16S rRNA in bridges B5 and B8.

Functionally, binds to 23S rRNA. Forms part of two intersubunit bridges in the 70S ribosome. In Chlorobium chlorochromatii (strain CaD3), this protein is Large ribosomal subunit protein uL14.